The following is a 481-amino-acid chain: Cardiolipin synthase A (481 aa).

2 helical membrane passes run 10 to 30 and 40 to 60; these read FFGY…LHAL and IAWA…YLIF. PLD phosphodiesterase domains lie at 220-247 and 394-421; these read VNFR…GDEY and QPGF…DNRS. Residues His-225, Lys-227, Asp-232, His-399, Lys-401, and Asp-406 contribute to the active site.

Belongs to the phospholipase D family. Cardiolipin synthase subfamily. ClsA sub-subfamily.

Its subcellular location is the cell inner membrane. The enzyme catalyses 2 a 1,2-diacyl-sn-glycero-3-phospho-(1'-sn-glycerol) = a cardiolipin + glycerol. Catalyzes the reversible phosphatidyl group transfer from one phosphatidylglycerol molecule to another to form cardiolipin (CL) (diphosphatidylglycerol) and glycerol. The chain is Cardiolipin synthase A from Pseudomonas putida (strain ATCC 47054 / DSM 6125 / CFBP 8728 / NCIMB 11950 / KT2440).